The primary structure comprises 58 residues: Galectin-1 (58 aa).

A Galectin domain is found at 2–58; that stretch reads GITXTSLHVAPGARLAVKGDIPAGAKSWVINLGKGENDIMLHFNARFDAHGDIRTIV. A beta-D-galactoside is bound by residues 43-47 and histidine 51; that span reads HFNAR.

In terms of assembly, monomer. Detected in most tissues, most abundantly in skin.

It is found in the secreted. The protein localises to the extracellular space. Its subcellular location is the extracellular matrix. In terms of biological role, may regulate cell apoptosis and cell differentiation. Binds beta-galactoside and a wide array of complex carbohydrates. This chain is Galectin-1, found in Podarcis hispanicus (Iberian wall lizard).